The chain runs to 1391 residues: DNA-directed RNA polymerase subunit beta' (1391 aa).

The Zn(2+) site is built by Cys-72, Cys-74, Cys-87, and Cys-90. Mg(2+) is bound by residues Asp-462, Asp-464, and Asp-466. Zn(2+) is bound by residues Cys-816, Cys-890, Cys-897, and Cys-900.

The protein belongs to the RNA polymerase beta' chain family. As to quaternary structure, the RNAP catalytic core consists of 2 alpha, 1 beta, 1 beta' and 1 omega subunit. When a sigma factor is associated with the core the holoenzyme is formed, which can initiate transcription. It depends on Mg(2+) as a cofactor. The cofactor is Zn(2+).

The catalysed reaction is RNA(n) + a ribonucleoside 5'-triphosphate = RNA(n+1) + diphosphate. DNA-dependent RNA polymerase catalyzes the transcription of DNA into RNA using the four ribonucleoside triphosphates as substrates. In Neisseria meningitidis serogroup C / serotype 2a (strain ATCC 700532 / DSM 15464 / FAM18), this protein is DNA-directed RNA polymerase subunit beta'.